The sequence spans 100 residues: Small ribosomal subunit protein uS14 (100 aa).

It belongs to the universal ribosomal protein uS14 family. As to quaternary structure, part of the 30S ribosomal subunit. Contacts proteins S3 and S10.

Binds 16S rRNA, required for the assembly of 30S particles and may also be responsible for determining the conformation of the 16S rRNA at the A site. This Prochlorococcus marinus (strain MIT 9303) protein is Small ribosomal subunit protein uS14.